Here is a 516-residue protein sequence, read N- to C-terminus: Acyl-lipid (7-3)-desaturase, chloroplastic (516 aa).

The tract at residues 1-25 is disordered; that stretch reads MNATMQRSAVAGRTSGKVATTARAS. The transit peptide at 1–47 directs the protein to the chloroplast; sequence MNATMQRSAVAGRTSGKVATTARASSMARPRLPIAGRVARRSAVTVR. The 66-residue stretch at 83–148 folds into the Cytochrome b5 heme-binding domain; it reads WTVYRGVAYD…LADFPVDAVP (66 aa). Residues His100 and His123 each contribute to the heme site. 2 helical membrane passes run 186 to 206 and 209 to 229; these read GAAFAVLGYAAAMYALYTYDA and LTGALLGLGGAWIGLTIQHCG. A Histidine box-1 motif is present at residues 227-231; sequence HCGNH. The Histidine box-2 motif lies at 262–267; it reads HQVSHH. The next 4 helical transmembrane spans lie at 305–325, 354–374, 375–395, and 423–443; these read MWALFPFLQLVFQIGDWQALL, FLLYGLPAFLHGPTAMLGGAA, GYLFTQSIVLAATFAVSHNVP, and VLTSANWGGVIGNFFTGGLNL. The short motif at 444–448 is the Histidine box-3 element; it reads QIEHH.

Belongs to the fatty acid desaturase type 1 family. Fe(2+) serves as cofactor.

The protein localises to the plastid. Its subcellular location is the chloroplast membrane. The catalysed reaction is a (7Z,10Z,13Z,16Z,19Z)-docosapentaenoyl-containing glycerolipid + 2 Fe(II)-[cytochrome b5] + O2 + 2 H(+) = a (4Z,7Z,10Z,13Z,16Z,19Z)-docosahexaenoyl-containing glycerolipid + 2 Fe(III)-[cytochrome b5] + 2 H2O. It carries out the reaction a (7Z,10Z,13Z,16Z)-docosatetraenoyl-containing glycerolipid + 2 Fe(II)-[cytochrome b5] + O2 + 2 H(+) = a (4Z,7Z,10Z,13Z,16Z)-docosapentaenoyl-containing glycerolipid + 2 Fe(III)-[cytochrome b5] + 2 H2O. In terms of biological role, fatty acid desaturase that introduces a cis double bond at the 4-position in 16-carbon polyunsaturated fatty acids that contain a Delta(7) double bond, resulting in the production of 16 carbon fatty acid (7Z,10Z,13Z)-hexadeca-7,10,13-trienoate. The polypeptide is Acyl-lipid (7-3)-desaturase, chloroplastic (Chlamydomonas reinhardtii (Chlamydomonas smithii)).